A 227-amino-acid polypeptide reads, in one-letter code: Ribosomal RNA large subunit methyltransferase E (227 aa).

Residues Gly78, Trp80, Asp103, Asp119, and Asp143 each contribute to the S-adenosyl-L-methionine site. The active-site Proton acceptor is the Lys183.

This sequence belongs to the class I-like SAM-binding methyltransferase superfamily. RNA methyltransferase RlmE family.

The protein resides in the cytoplasm. It catalyses the reaction uridine(2552) in 23S rRNA + S-adenosyl-L-methionine = 2'-O-methyluridine(2552) in 23S rRNA + S-adenosyl-L-homocysteine + H(+). Specifically methylates the uridine in position 2552 of 23S rRNA at the 2'-O position of the ribose in the fully assembled 50S ribosomal subunit. In Rickettsia conorii (strain ATCC VR-613 / Malish 7), this protein is Ribosomal RNA large subunit methyltransferase E.